The chain runs to 102 residues: MANEKIRIRLKAYDHRVLDQSAEKIVDTAKRSGAKVSGPIPLPTEKSIYTILRAVHKYKDAREQFEMRTHKRLIDIVNPTPKTVDALMRLELPSGVDIEIKL.

Belongs to the universal ribosomal protein uS10 family. As to quaternary structure, part of the 30S ribosomal subunit.

Involved in the binding of tRNA to the ribosomes. The sequence is that of Small ribosomal subunit protein uS10 from Exiguobacterium sp. (strain ATCC BAA-1283 / AT1b).